Consider the following 20-residue polypeptide: NAIPGNYYRWPYAKVPYVID.

A Peptidase M12A domain is found at 1 to 20 (NAIPGNYYRWPYAKVPYVID).

It depends on Zn(2+) as a cofactor.

Functionally, active against casein. Has a role as a digestive enzyme. This is Astacin-like peptidase p18 from Argiope aurantia (Black-and-yellow garden spider).